Here is a 519-residue protein sequence, read N- to C-terminus: Cyclic AMP-responsive element-binding protein 3-like protein 1 (519 aa).

The tract at residues 1–60 (MDAVLEPFPADRLFPGSSFLDLGDLNESDFLNNAHFPEHLDHFTENMEDFSNDLFSSFFD) is required for transcriptional activation. The Cytoplasmic segment spans residues 1-374 (MDAVLEPFPA…YKMAATQTGT (374 aa)). The segment at 71 to 98 (LDMELDSPTPGIQAEHSYSLSGDSAPQS) is disordered. Positions 86-97 (HSYSLSGDSAPQ) are enriched in polar residues. K184 is covalently cross-linked (Glycyl lysine isopeptide (Lys-Gly) (interchain with G-Cter in SUMO2)). Residues 200-259 (DLVQMPPTPPSSHGSDSDGSQSPRSLPPSSPVRPMARSSTAISTSPLLTAPHKLQGTSGP) form a disordered region. The segment covering 210-223 (SSHGSDSDGSQSPR) has biased composition (low complexity). The segment covering 236 to 246 (RSSTAISTSPL) has biased composition (polar residues). The bZIP domain maps to 290 to 353 (ALKRVRRKIK…RTLLQQLQKL (64 aa)). The interval 292–321 (KRVRRKIKNKISAQESRRKKKEYVECLEKK) is basic motif. A leucine-zipper region spans residues 332–353 (LWKKVETLENANRTLLQQLQKL). Residues 375–395 (CLMVAALCFVLVLGSLVPCLP) traverse the membrane as a helical; Signal-anchor for type II membrane protein segment. An MBTPS2 recognition motif is present at residues 392–395 (PCLP). Topologically, residues 396–519 (EFSSGSQTVK…LGPNTTIKLS (124 aa)) are lumenal. Positions 423–426 (RSLL) match the MBTPS1 recognition motif. A disordered region spans residues 484 to 519 (EAWPKDGGNGTSPDFSHSKEWFHDRDLGPNTTIKLS). The N-linked (GlcNAc...) asparagine glycan is linked to N492. Over residues 499-510 (SHSKEWFHDRDL) the composition is skewed to basic and acidic residues. N513 carries an N-linked (GlcNAc...) asparagine glycan.

Belongs to the bZIP family. ATF subfamily. Interacts with SMAD4, the interaction takes place upon TGFB1 induction and SMAD4 acts as a CREB3L1 coactivator to induce the expression of genes involved in assembly of collagen extracellular matrix. Post-translationally, upon ER stress or DNA damage, translocated to the Golgi apparatus, where it is processed by regulated intramembrane proteolysis (RIP) to release the cytosol-facing N-terminal transcription factor domain. The cleavage is performed sequentially by site-1 and site-2 proteases (S1P/MBTPS1 and S2P/MBTPS2). RIP is induced by TGFB1 and ceramide. N-glycosylated. In terms of processing, ubiquitinated by HRD1/SYVN1; undergoes 'Lys-48'-linked ubiquitination, followed by rapid proteasomal degradation under normal conditions. Upon ER stress, SYVN1 E3 ubiquitin-protein ligase dissociates from its substrate, ubiquitination does not occur and CREB3L1 is stabilized. Expressed in several tissues, with highest levels in pancreas and prostate. Expressed at relatively lower levels in brain.

The protein resides in the endoplasmic reticulum membrane. Its subcellular location is the nucleus. In terms of biological role, precursor of the transcription factor form (Processed cyclic AMP-responsive element-binding protein 3-like protein 1), which is embedded in the endoplasmic reticulum membrane with N-terminal DNA-binding and transcription activation domains oriented toward the cytosolic face of the membrane. In response to ER stress or DNA damage, transported to the Golgi, where it is cleaved in a site-specific manner by resident proteases S1P/MBTPS1 and S2P/MBTPS2. The released N-terminal cytosolic domain is translocated to the nucleus where it activates transcription of specific target genes involved in the cell-cycle progression inhibition. Transcription factor involved in cell type specific DNA damage and unfolded protein response (UPR). Binds the DNA consensus sequence 5'-GTGXGCXGC-3'. Plays a critical role in bone formation through the transcription of COL1A1, and possibly COL1A2, and the secretion of bone matrix proteins. Directly binds to the UPR element (UPRE)-like sequence in an osteoblast-specific COL1A1 promoter region and induces its transcription. Does not regulate COL1A1 in other tissues, such as skin. Required to protect astrocytes from ER stress-induced cell death. In astrocytes, binds to the cAMP response element (CRE) of the BiP/HSPA5 promoter and participate in its transcriptional activation. In astrocytes and osteoblasts, upon DNA damage, inhibits cell-cycle progression after G2/M phase by binding to promoters and activating transcription of genes encoding cell-cycle inhibitors, such as p21/CDKN1A. Required for TGFB1 to activate genes involved in the assembly of collagen extracellular matrix. Functionally, (Microbial infection) May play a role in limiting virus spread by inhibiting proliferation of virus-infected cells. Upon infection with diverse DNA and RNA viruses, inhibits cell-cycle progression by binding to promoters and activating transcription of genes encoding cell-cycle inhibitors, such as p21/CDKN1A. In Homo sapiens (Human), this protein is Cyclic AMP-responsive element-binding protein 3-like protein 1.